Consider the following 453-residue polypeptide: Allantoinase (453 aa).

Zn(2+) contacts are provided by His59, His61, Lys146, His186, His242, and Asp315. Lys146 bears the N6-carboxylysine mark.

Belongs to the metallo-dependent hydrolases superfamily. Allantoinase family. As to quaternary structure, homotetramer. Zn(2+) serves as cofactor. In terms of processing, carboxylation allows a single lysine to coordinate two zinc ions.

It carries out the reaction (S)-allantoin + H2O = allantoate + H(+). It functions in the pathway nitrogen metabolism; (S)-allantoin degradation; allantoate from (S)-allantoin: step 1/1. Functionally, catalyzes the conversion of allantoin (5-ureidohydantoin) to allantoic acid by hydrolytic cleavage of the five-member hydantoin ring. The sequence is that of Allantoinase from Escherichia coli (strain K12 / MC4100 / BW2952).